A 436-amino-acid chain; its full sequence is GTPase Der (436 aa).

EngA-type G domains are found at residues 4–167 (PVVA…KNIP) and 176–351 (VQFC…ENHS). Residues 10 to 17 (GRPNVGKS), 57 to 61 (DTGGI), 119 to 122 (NKVD), 182 to 189 (GRPNVGKS), 229 to 233 (DTAGM), and 294 to 297 (NKWD) each bind GTP. Residues 352-436 (MRVQTNILND…PIRIFARARK (85 aa)) enclose the KH-like domain.

It belongs to the TRAFAC class TrmE-Era-EngA-EngB-Septin-like GTPase superfamily. EngA (Der) GTPase family. In terms of assembly, associates with the 50S ribosomal subunit.

Its function is as follows. GTPase that plays an essential role in the late steps of ribosome biogenesis. This is GTPase Der from Bacillus licheniformis (strain ATCC 14580 / DSM 13 / JCM 2505 / CCUG 7422 / NBRC 12200 / NCIMB 9375 / NCTC 10341 / NRRL NRS-1264 / Gibson 46).